Here is a 174-residue protein sequence, read N- to C-terminus: MAAVVLGGDIMGPERIFPNQTEELGPHQGPTEGTGDWSSEEPEEEQEETGTGPAGYSYQPLNQDPEQEEVELAPVGDGEDVVADIQDRIQALGLHLPDPPLESEDEDEEGATALSNHSSIPMDPEHVELVKRTMAGVSLPAPGVPAWAREISDAQWEDVVQKALQARQATPAWK.

Disordered stretches follow at residues 1–77 (MAAV…PVGD) and 94–123 (LHLP…IPMD). Composition is skewed to acidic residues over residues 38–48 (SSEEPEEEQEE), 65–77 (PEQE…PVGD), and 101–110 (LESEDEDEEG). At serine 103 the chain carries Phosphoserine.

Functionally, may play an important role in spermatogenesis and/or testis development. This chain is Male-enhanced antigen 1 (MEA1), found in Sus scrofa (Pig).